Here is a 223-residue protein sequence, read N- to C-terminus: MNIAKLIDHTILKPNSTKEDVMKVIEEAKQYKFASVCINPTWVKLAAEELAGHDVDVCTVIGFPLGASTTETKAFETKDAIAKGATEVDMVINVGALKDGDNEFVEKDIYEVVQAAKGKALVKVIIETCLLTDEEKVRACELSVKAGADFVKTSTGFSTGGATAEDIALMRKTVGPNVGVKASGGVRTREDADKMVEAGASRVGASASVAIVLNDAKGATDNY.

Aspartate 89 acts as the Proton donor/acceptor in catalysis. The active-site Schiff-base intermediate with acetaldehyde is the lysine 152. Lysine 181 functions as the Proton donor/acceptor in the catalytic mechanism.

This sequence belongs to the DeoC/FbaB aldolase family. DeoC type 1 subfamily.

It is found in the cytoplasm. The enzyme catalyses 2-deoxy-D-ribose 5-phosphate = D-glyceraldehyde 3-phosphate + acetaldehyde. The protein operates within carbohydrate degradation; 2-deoxy-D-ribose 1-phosphate degradation; D-glyceraldehyde 3-phosphate and acetaldehyde from 2-deoxy-alpha-D-ribose 1-phosphate: step 2/2. Catalyzes a reversible aldol reaction between acetaldehyde and D-glyceraldehyde 3-phosphate to generate 2-deoxy-D-ribose 5-phosphate. This is Deoxyribose-phosphate aldolase from Bacillus mycoides (strain KBAB4) (Bacillus weihenstephanensis).